A 309-amino-acid polypeptide reads, in one-letter code: 4-hydroxy-3-methylbut-2-enyl diphosphate reductase (309 aa).

Cysteine 12 serves as a coordination point for [4Fe-4S] cluster. (2E)-4-hydroxy-3-methylbut-2-enyl diphosphate is bound by residues histidine 41 and histidine 74. Residues histidine 41 and histidine 74 each contribute to the dimethylallyl diphosphate site. Histidine 41 and histidine 74 together coordinate isopentenyl diphosphate. A [4Fe-4S] cluster-binding site is contributed by cysteine 96. A (2E)-4-hydroxy-3-methylbut-2-enyl diphosphate-binding site is contributed by histidine 124. Histidine 124 is a binding site for dimethylallyl diphosphate. Isopentenyl diphosphate is bound at residue histidine 124. The active-site Proton donor is glutamate 126. Residue threonine 167 coordinates (2E)-4-hydroxy-3-methylbut-2-enyl diphosphate. Cysteine 197 contributes to the [4Fe-4S] cluster binding site. (2E)-4-hydroxy-3-methylbut-2-enyl diphosphate-binding residues include serine 225, serine 226, asparagine 227, and serine 269. Residues serine 225, serine 226, asparagine 227, and serine 269 each contribute to the dimethylallyl diphosphate site. Isopentenyl diphosphate contacts are provided by serine 225, serine 226, asparagine 227, and serine 269.

It belongs to the IspH family. It depends on [4Fe-4S] cluster as a cofactor.

It carries out the reaction isopentenyl diphosphate + 2 oxidized [2Fe-2S]-[ferredoxin] + H2O = (2E)-4-hydroxy-3-methylbut-2-enyl diphosphate + 2 reduced [2Fe-2S]-[ferredoxin] + 2 H(+). The enzyme catalyses dimethylallyl diphosphate + 2 oxidized [2Fe-2S]-[ferredoxin] + H2O = (2E)-4-hydroxy-3-methylbut-2-enyl diphosphate + 2 reduced [2Fe-2S]-[ferredoxin] + 2 H(+). The protein operates within isoprenoid biosynthesis; dimethylallyl diphosphate biosynthesis; dimethylallyl diphosphate from (2E)-4-hydroxy-3-methylbutenyl diphosphate: step 1/1. Its pathway is isoprenoid biosynthesis; isopentenyl diphosphate biosynthesis via DXP pathway; isopentenyl diphosphate from 1-deoxy-D-xylulose 5-phosphate: step 6/6. In terms of biological role, catalyzes the conversion of 1-hydroxy-2-methyl-2-(E)-butenyl 4-diphosphate (HMBPP) into a mixture of isopentenyl diphosphate (IPP) and dimethylallyl diphosphate (DMAPP). Acts in the terminal step of the DOXP/MEP pathway for isoprenoid precursor biosynthesis. The polypeptide is 4-hydroxy-3-methylbut-2-enyl diphosphate reductase (Pseudoalteromonas translucida (strain TAC 125)).